A 156-amino-acid polypeptide reads, in one-letter code: Small ribosomal subunit protein uS7 (156 aa).

This sequence belongs to the universal ribosomal protein uS7 family. Part of the 30S ribosomal subunit. Contacts proteins S9 and S11.

Its function is as follows. One of the primary rRNA binding proteins, it binds directly to 16S rRNA where it nucleates assembly of the head domain of the 30S subunit. Is located at the subunit interface close to the decoding center, probably blocks exit of the E-site tRNA. The polypeptide is Small ribosomal subunit protein uS7 (Exiguobacterium sibiricum (strain DSM 17290 / CCUG 55495 / CIP 109462 / JCM 13490 / 255-15)).